Here is a 161-residue protein sequence, read N- to C-terminus: Allophycocyanin subunit alpha-B (161 aa).

Asn-71 carries the N4-methylasparagine modification. Cys-81 lines the (2R,3E)-phycocyanobilin pocket.

This sequence belongs to the phycobiliprotein family. As to quaternary structure, heterodimer of an alpha-B and a beta chain forming AP-B. In terms of processing, contains one covalently linked bilin chromophore. The chromophore is added by phycocyanobilin lyase CpcUS.

It is found in the cellular thylakoid membrane. A variant alpha-allophycocyanin (AP) which forms a complex with beta-AP with maximum absorption at approximately 670 nanometers. It is an important phycobilisome terminal emitter involved in energy transfer to photosystem I. The sequence is that of Allophycocyanin subunit alpha-B (apcD) from Picosynechococcus sp. (strain ATCC 27264 / PCC 7002 / PR-6) (Agmenellum quadruplicatum).